The sequence spans 685 residues: Exocyst complex component 8 (685 aa).

The region spanning 151–251 (YLVYNGDLTE…WLEILEQTKK (101 aa)) is the PH domain. The segment covering 254 to 263 (ALNEKQKQEE) has biased composition (basic and acidic residues). Residues 254–273 (ALNEKQKQEETTPQLPVVPE) are disordered.

It belongs to the EXO84 family. As to quaternary structure, the exocyst complex is composed of exoc1, exoc2, exoc3, exoc4, exoc5, exoc6, exoc7 and exoc8.

The protein resides in the cytoplasm. The protein localises to the perinuclear region. It localises to the cell projection. Its subcellular location is the growth cone. Component of the exocyst complex involved in the docking of exocytic vesicles with fusion sites on the plasma membrane. In Xenopus laevis (African clawed frog), this protein is Exocyst complex component 8 (exoc8).